Reading from the N-terminus, the 147-residue chain is Riboflavin kinase (147 aa).

15-20 (GLGEGR) serves as a coordination point for CDP. Positions 44 and 46 each coordinate Mg(2+). Residues T97 and E104 each coordinate FMN. 109–112 (TELR) is a CDP binding site.

Belongs to the archaeal riboflavin kinase family. Requires Mg(2+) as cofactor.

The enzyme catalyses riboflavin + CTP = CDP + FMN + H(+). It participates in cofactor biosynthesis; FMN biosynthesis; FMN from riboflavin (CTP route): step 1/1. In terms of biological role, catalyzes the CTP-dependent phosphorylation of riboflavin (vitamin B2) to form flavin mononucleotide (FMN). The chain is Riboflavin kinase from Methanopyrus kandleri (strain AV19 / DSM 6324 / JCM 9639 / NBRC 100938).